A 554-amino-acid polypeptide reads, in one-letter code: Glucose-6-phosphate isomerase 1 (554 aa).

Glu-359 functions as the Proton donor in the catalytic mechanism. Residues His-390 and Lys-518 contribute to the active site.

It belongs to the GPI family.

The protein resides in the cytoplasm. The catalysed reaction is alpha-D-glucose 6-phosphate = beta-D-fructose 6-phosphate. The protein operates within carbohydrate biosynthesis; gluconeogenesis. Its pathway is carbohydrate degradation; glycolysis; D-glyceraldehyde 3-phosphate and glycerone phosphate from D-glucose: step 2/4. Functionally, catalyzes the reversible isomerization of glucose-6-phosphate to fructose-6-phosphate. This Pseudomonas putida (strain ATCC 47054 / DSM 6125 / CFBP 8728 / NCIMB 11950 / KT2440) protein is Glucose-6-phosphate isomerase 1.